A 543-amino-acid chain; its full sequence is Hydroxylamine reductase (543 aa).

The [4Fe-4S] cluster site is built by C5, C8, C17, and C23. The hybrid [4Fe-2O-2S] cluster site is built by H236, E260, C304, C398, C426, C451, E486, and K488. Residue C398 is modified to Cysteine persulfide.

This sequence belongs to the HCP family. [4Fe-4S] cluster is required as a cofactor. It depends on hybrid [4Fe-2O-2S] cluster as a cofactor.

The protein resides in the cytoplasm. The catalysed reaction is A + NH4(+) + H2O = hydroxylamine + AH2 + H(+). Functionally, catalyzes the reduction of hydroxylamine to form NH(3) and H(2)O. In Bacteroides thetaiotaomicron (strain ATCC 29148 / DSM 2079 / JCM 5827 / CCUG 10774 / NCTC 10582 / VPI-5482 / E50), this protein is Hydroxylamine reductase.